The sequence spans 189 residues: Large ribosomal subunit protein bL9 (189 aa).

The protein belongs to the bacterial ribosomal protein bL9 family.

In terms of biological role, binds to the 23S rRNA. This is Large ribosomal subunit protein bL9 from Cereibacter sphaeroides (strain ATCC 17023 / DSM 158 / JCM 6121 / CCUG 31486 / LMG 2827 / NBRC 12203 / NCIMB 8253 / ATH 2.4.1.) (Rhodobacter sphaeroides).